Here is a 101-residue protein sequence, read N- to C-terminus: Parathymosin (101 aa).

Positions 1–101 are disordered; sequence MSEKSVEAAA…RQKTENGASA (101 aa). Serine 2 is modified (N-acetylserine). Serine 2 is modified (phosphoserine). Lysine 4 bears the N6-acetyllysine mark. Phosphoserine is present on residues serine 5 and serine 13. Over residues 13 to 37 the composition is skewed to basic and acidic residues; that stretch reads SAKDLKEKKDKVEEKAGRKERKKEV. At lysine 15 the chain carries N6-acetyllysine. The span at 38–74 shows a compositional bias: acidic residues; that stretch reads VEEEENGAEEEEEETAEDGEDDDEGDEEDEEEEEEDE. Threonine 52 bears the Phosphothreonine mark. N6-acetyllysine is present on lysine 91.

This sequence belongs to the pro/parathymosin family.

Functionally, parathymosin may mediate immune function by blocking the effect of prothymosin alpha which confers resistance to certain opportunistic infections. This chain is Parathymosin (Ptms), found in Mus musculus (Mouse).